Consider the following 286-residue polypeptide: Putative short-chain type dehydrogenase/reductase Rv0148 (286 aa).

Residue Val-11–Val-35 coordinates NAD(+). Substrate is bound at residue Ser-151. Residue Tyr-164 is the Proton acceptor of the active site. Lys-280 participates in a covalent cross-link: Isoglutamyl lysine isopeptide (Lys-Gln) (interchain with Q-Cter in protein Pup).

Belongs to the short-chain dehydrogenases/reductases (SDR) family. Post-translationally, pupylated at Lys-280 by the prokaryotic ubiquitin-like protein Pup, which probably leads to its degradation by the proteasome.

This chain is Putative short-chain type dehydrogenase/reductase Rv0148, found in Mycobacterium tuberculosis (strain ATCC 25618 / H37Rv).